Consider the following 279-residue polypeptide: Oxygen-dependent coproporphyrinogen-III oxidase (279 aa).

Ser-102 contacts substrate. 2 residues coordinate a divalent metal cation: His-106 and His-116. The active-site Proton donor is His-116. 118–120 provides a ligand contact to substrate; sequence NTR. Residues His-149 and His-179 each contribute to the a divalent metal cation site. The interval 244–279 is important for dimerization; it reads YVEFNLLYDRGTKFGLMTDGNVEAILMSLPPEVKWA.

This sequence belongs to the aerobic coproporphyrinogen-III oxidase family. In terms of assembly, homodimer. A divalent metal cation is required as a cofactor.

It is found in the cytoplasm. It carries out the reaction coproporphyrinogen III + O2 + 2 H(+) = protoporphyrinogen IX + 2 CO2 + 2 H2O. The protein operates within porphyrin-containing compound metabolism; protoporphyrin-IX biosynthesis; protoporphyrinogen-IX from coproporphyrinogen-III (O2 route): step 1/1. Functionally, involved in the heme biosynthesis. Catalyzes the aerobic oxidative decarboxylation of propionate groups of rings A and B of coproporphyrinogen-III to yield the vinyl groups in protoporphyrinogen-IX. This is Oxygen-dependent coproporphyrinogen-III oxidase from Rickettsia bellii (strain OSU 85-389).